Consider the following 294-residue polypeptide: Lipoyl synthase (294 aa).

7 residues coordinate [4Fe-4S] cluster: Cys41, Cys46, Cys52, Cys67, Cys71, Cys74, and Ser281. The region spanning 53–270 (FNNGTATFMI…KLESLAMGFT (218 aa)) is the Radical SAM core domain.

Belongs to the radical SAM superfamily. Lipoyl synthase family. [4Fe-4S] cluster serves as cofactor.

Its subcellular location is the cytoplasm. The catalysed reaction is [[Fe-S] cluster scaffold protein carrying a second [4Fe-4S](2+) cluster] + N(6)-octanoyl-L-lysyl-[protein] + 2 oxidized [2Fe-2S]-[ferredoxin] + 2 S-adenosyl-L-methionine + 4 H(+) = [[Fe-S] cluster scaffold protein] + N(6)-[(R)-dihydrolipoyl]-L-lysyl-[protein] + 4 Fe(3+) + 2 hydrogen sulfide + 2 5'-deoxyadenosine + 2 L-methionine + 2 reduced [2Fe-2S]-[ferredoxin]. The protein operates within protein modification; protein lipoylation via endogenous pathway; protein N(6)-(lipoyl)lysine from octanoyl-[acyl-carrier-protein]: step 2/2. Catalyzes the radical-mediated insertion of two sulfur atoms into the C-6 and C-8 positions of the octanoyl moiety bound to the lipoyl domains of lipoate-dependent enzymes, thereby converting the octanoylated domains into lipoylated derivatives. The protein is Lipoyl synthase of Baumannia cicadellinicola subsp. Homalodisca coagulata.